Consider the following 479-residue polypeptide: Sulfate adenylyltransferase subunit 1 (479 aa).

Residues Lys25–Arg239 form the tr-type G domain. The tract at residues Gly34–Ser41 is G1. Residue Gly34–Ser41 coordinates GTP. The tract at residues Gly92 to Asp96 is G2. Residues Asp113 to Gly116 are G3. Residues Asp113 to His117 and Asn168 to Asp171 contribute to the GTP site. Residues Asn168–Asp171 form a G4 region. The segment at Ser206–Leu208 is G5.

This sequence belongs to the TRAFAC class translation factor GTPase superfamily. Classic translation factor GTPase family. CysN/NodQ subfamily. Heterodimer composed of CysD, the smaller subunit, and CysN.

It catalyses the reaction sulfate + ATP + H(+) = adenosine 5'-phosphosulfate + diphosphate. The protein operates within sulfur metabolism; hydrogen sulfide biosynthesis; sulfite from sulfate: step 1/3. In terms of biological role, with CysD forms the ATP sulfurylase (ATPS) that catalyzes the adenylation of sulfate producing adenosine 5'-phosphosulfate (APS) and diphosphate, the first enzymatic step in sulfur assimilation pathway. APS synthesis involves the formation of a high-energy phosphoric-sulfuric acid anhydride bond driven by GTP hydrolysis by CysN coupled to ATP hydrolysis by CysD. The chain is Sulfate adenylyltransferase subunit 1 from Salmonella agona (strain SL483).